A 527-amino-acid polypeptide reads, in one-letter code: Dual specificity protein kinase shkA (527 aa).

The Protein kinase domain occupies 45–304 (ITTESILGDG…GIVSELEEII (260 aa)). Residues 51-59 (LGDGSFGTV) and lysine 72 contribute to the ATP site. Aspartate 167 acts as the Proton acceptor in catalysis. An SH2 domain is found at 424–513 (WFHGDISTSE…INTPCLGSRF (90 aa)).

The protein belongs to the protein kinase superfamily. TKL Ser/Thr protein kinase family. SH2 domain-containing protein kinase subfamily.

It is found in the membrane. The enzyme catalyses L-seryl-[protein] + ATP = O-phospho-L-seryl-[protein] + ADP + H(+). It catalyses the reaction L-threonyl-[protein] + ATP = O-phospho-L-threonyl-[protein] + ADP + H(+). Required for proper chemotaxis and phagocytosis; proper spatiotemporal control of F-actin levels in chemotaxing cells. Negative regulator of the PI3K (phosphatidylinositol 3 kinase) pathway. Predominantly phosphorylates serines and threonines and tyrosines at a lower level. The polypeptide is Dual specificity protein kinase shkA (shkA) (Dictyostelium discoideum (Social amoeba)).